The following is a 191-amino-acid chain: Thymidylate kinase (191 aa).

7–14 contacts ATP; it reads GVDGAGKS.

This sequence belongs to the thymidylate kinase family.

The enzyme catalyses dTMP + ATP = dTDP + ADP. Phosphorylation of dTMP to form dTDP in both de novo and salvage pathways of dTTP synthesis. The sequence is that of Thymidylate kinase from Helicobacter pylori (strain Shi470).